A 798-amino-acid chain; its full sequence is Galactinol--sucrose galactosyltransferase (798 aa).

The protein belongs to the glycosyl hydrolases 36 family.

The catalysed reaction is alpha-D-galactosyl-(1-&gt;3)-1D-myo-inositol + sucrose = raffinose + myo-inositol. Its activity is regulated as follows. Inhibited by 1-deoxygalactonojirimycin. Not inhibited by stachyose. Strong inhibition of the hydrolytic activity by sucrose. Functionally, transglycosidase operating by a ping-pong reaction mechanism. Involved in the synthesis of raffinose, a major soluble carbohydrate in seeds, roots and tubers. Able to utilize D-ononitol and D-pinitol as acceptors. May also act as a glycoside hydrolase. This chain is Galactinol--sucrose galactosyltransferase (RFS), found in Pisum sativum (Garden pea).